Consider the following 322-residue polypeptide: DNA repair and recombination protein RadA (322 aa).

G105 to T112 serves as a coordination point for ATP.

It belongs to the eukaryotic RecA-like protein family.

Its function is as follows. Involved in DNA repair and in homologous recombination. Binds and assemble on single-stranded DNA to form a nucleoprotein filament. Hydrolyzes ATP in a ssDNA-dependent manner and promotes DNA strand exchange between homologous DNA molecules. This Methanococcus maripaludis (strain C7 / ATCC BAA-1331) protein is DNA repair and recombination protein RadA.